The following is a 525-amino-acid chain: Lysine--tRNA ligase (525 aa).

Residues 44 to 52 (PSGLPHIGT) carry the 'HIGH' region motif. The 'KMSKS' region motif lies at 290–294 (KISKS). Lys-293 contributes to the ATP binding site.

It belongs to the class-I aminoacyl-tRNA synthetase family.

The protein resides in the cytoplasm. It carries out the reaction tRNA(Lys) + L-lysine + ATP = L-lysyl-tRNA(Lys) + AMP + diphosphate. The sequence is that of Lysine--tRNA ligase from Rickettsia felis (strain ATCC VR-1525 / URRWXCal2) (Rickettsia azadi).